We begin with the raw amino-acid sequence, 307 residues long: Auxiliary protein GraX (307 aa).

Homodimer. Interacts with GraR and GraS.

Functionally, plays a role in resistance against cationic antimicrobial peptides (CAMPs). Facilitates the activation of GraS to transduce the signal to GraR. In Staphylococcus aureus (strain NCTC 8325 / PS 47), this protein is Auxiliary protein GraX (graX).